Here is a 1123-residue protein sequence, read N- to C-terminus: Rabphilin-1 (1123 aa).

Basic residues predominate over residues 1-17 (MTKSTKLRHCKQKKKKP). Disordered regions lie at residues 1–56 (MTKS…GSRS) and 88–140 (SAHN…PSTH). Residues 36-46 (DAATTTSTTDA) are compositionally biased toward low complexity. The 127-residue stretch at 215 to 341 (KAQTGSITAA…KKSGAWFYKE (127 aa)) folds into the RabBD domain. An FYVE-type zinc finger spans residues 263 to 328 (GNGVTHCLLC…LCKICSEARE (66 aa)). Residues C269, C272, C288, C291, C296, C300, C320, and C323 each contribute to the Zn(2+) site. Polar residues-rich tracts occupy residues 365 to 375 (PNASSAATPLS), 387 to 400 (TMPS…TTPK), 410 to 428 (PGLQ…GTRR), and 487 to 497 (ASSSDGESFVQ). Disordered regions lie at residues 365–710 (PNAS…VGSA), 737–779 (TSRA…LRTS), and 796–818 (HIVS…VPIP). A compositionally biased stretch (basic and acidic residues) spans 531–541 (SRREANMERFS). Over residues 563-574 (ESRPSTRSTSPR) the composition is skewed to low complexity. Composition is skewed to polar residues over residues 605–632 (VVQS…QQQA) and 649–666 (PDRT…TSLV). Over residues 742–753 (SPLAASSSFLSS) the composition is skewed to low complexity. The segment covering 756-768 (DDTKQKNRRRDGV) has biased composition (basic and acidic residues). Residues 803-818 (TSSTTSNQNHTSVPIP) are compositionally biased toward low complexity. C2 domains follow at residues 844-967 (SLGS…NLYL) and 984-1103 (DRGK…RQWI). Ca(2+) is bound by residues D875, D881, D936, D938, D943, D1015, D1021, D1075, D1077, and D1083.

Requires Ca(2+) as cofactor.

It localises to the synapse. In terms of biological role, rab-3 effector. The protein is Rabphilin-1 (rbf-1) of Caenorhabditis elegans.